Reading from the N-terminus, the 222-residue chain is Salivary anticoagulant protein P23 (222 aa).

The signal sequence occupies residues 1-17 (MLTVSLLTLSLAAYASA). Asn-56, Asn-73, Asn-109, and Asn-114 each carry an N-linked (GlcNAc...) asparagine glycan.

As to expression, salivary gland (at protein level). Adult midgut.

The protein resides in the secreted. Its function is as follows. Inhibits host coagulation by delaying thrombin generation and reducing endogenous thrombin potential (ETP). This chain is Salivary anticoagulant protein P23, found in Ixodes scapularis (Black-legged tick).